The sequence spans 370 residues: Queuine tRNA-ribosyltransferase (370 aa).

Asp92 functions as the Proton acceptor in the catalytic mechanism. Residues 92 to 96 (DSGGF), Asp146, Gln190, and Gly217 each bind substrate. Residues 248–254 (GVGTPEN) form an RNA binding region. The active-site Nucleophile is the Asp267. The Zn(2+) site is built by Cys305, Cys307, Cys310, and His336.

Belongs to the queuine tRNA-ribosyltransferase family. As to quaternary structure, homodimer. Within each dimer, one monomer is responsible for RNA recognition and catalysis, while the other monomer binds to the replacement base PreQ1. It depends on Zn(2+) as a cofactor.

It catalyses the reaction 7-aminomethyl-7-carbaguanine + guanosine(34) in tRNA = 7-aminomethyl-7-carbaguanosine(34) in tRNA + guanine. It participates in tRNA modification; tRNA-queuosine biosynthesis. Its function is as follows. Catalyzes the base-exchange of a guanine (G) residue with the queuine precursor 7-aminomethyl-7-deazaguanine (PreQ1) at position 34 (anticodon wobble position) in tRNAs with GU(N) anticodons (tRNA-Asp, -Asn, -His and -Tyr). Catalysis occurs through a double-displacement mechanism. The nucleophile active site attacks the C1' of nucleotide 34 to detach the guanine base from the RNA, forming a covalent enzyme-RNA intermediate. The proton acceptor active site deprotonates the incoming PreQ1, allowing a nucleophilic attack on the C1' of the ribose to form the product. After dissociation, two additional enzymatic reactions on the tRNA convert PreQ1 to queuine (Q), resulting in the hypermodified nucleoside queuosine (7-(((4,5-cis-dihydroxy-2-cyclopenten-1-yl)amino)methyl)-7-deazaguanosine). The protein is Queuine tRNA-ribosyltransferase of Desulforapulum autotrophicum (strain ATCC 43914 / DSM 3382 / VKM B-1955 / HRM2) (Desulfobacterium autotrophicum).